The primary structure comprises 729 residues: Fatty acid oxidation complex subunit alpha (729 aa).

The interval M1–K189 is enoyl-CoA hydratase/isomerase. A substrate-binding site is contributed by D296. The tract at residues E311 to A729 is 3-hydroxyacyl-CoA dehydrogenase. Residues M324, D343, V400–E402, K407, and S429 each bind NAD(+). Residue H450 is the For 3-hydroxyacyl-CoA dehydrogenase activity of the active site. Position 453 (N453) interacts with NAD(+). 2 residues coordinate substrate: N500 and Y660. Residues T707–A729 form a disordered region.

It in the N-terminal section; belongs to the enoyl-CoA hydratase/isomerase family. The protein in the C-terminal section; belongs to the 3-hydroxyacyl-CoA dehydrogenase family. Heterotetramer of two alpha chains (FadB) and two beta chains (FadA).

It catalyses the reaction a (3S)-3-hydroxyacyl-CoA + NAD(+) = a 3-oxoacyl-CoA + NADH + H(+). It carries out the reaction a (3S)-3-hydroxyacyl-CoA = a (2E)-enoyl-CoA + H2O. The catalysed reaction is a 4-saturated-(3S)-3-hydroxyacyl-CoA = a (3E)-enoyl-CoA + H2O. The enzyme catalyses (3S)-3-hydroxybutanoyl-CoA = (3R)-3-hydroxybutanoyl-CoA. It catalyses the reaction a (3Z)-enoyl-CoA = a 4-saturated (2E)-enoyl-CoA. It carries out the reaction a (3E)-enoyl-CoA = a 4-saturated (2E)-enoyl-CoA. Its pathway is lipid metabolism; fatty acid beta-oxidation. In terms of biological role, involved in the aerobic and anaerobic degradation of long-chain fatty acids via beta-oxidation cycle. Catalyzes the formation of 3-oxoacyl-CoA from enoyl-CoA via L-3-hydroxyacyl-CoA. It can also use D-3-hydroxyacyl-CoA and cis-3-enoyl-CoA as substrate. In Salmonella typhi, this protein is Fatty acid oxidation complex subunit alpha.